We begin with the raw amino-acid sequence, 296 residues long: Acetylglutamate kinase (296 aa).

Substrate-binding positions include 69 to 70 (GG), Arg-91, and Asn-192.

Belongs to the acetylglutamate kinase family. ArgB subfamily.

The protein localises to the cytoplasm. The catalysed reaction is N-acetyl-L-glutamate + ATP = N-acetyl-L-glutamyl 5-phosphate + ADP. Its pathway is amino-acid biosynthesis; L-arginine biosynthesis; N(2)-acetyl-L-ornithine from L-glutamate: step 2/4. Its function is as follows. Catalyzes the ATP-dependent phosphorylation of N-acetyl-L-glutamate. The polypeptide is Acetylglutamate kinase (Ruthia magnifica subsp. Calyptogena magnifica).